The chain runs to 432 residues: Glutamate-1-semialdehyde 2,1-aminomutase (432 aa).

Lys265 carries the N6-(pyridoxal phosphate)lysine modification.

This sequence belongs to the class-III pyridoxal-phosphate-dependent aminotransferase family. HemL subfamily. Homodimer. It depends on pyridoxal 5'-phosphate as a cofactor.

Its subcellular location is the cytoplasm. The enzyme catalyses (S)-4-amino-5-oxopentanoate = 5-aminolevulinate. It participates in porphyrin-containing compound metabolism; protoporphyrin-IX biosynthesis; 5-aminolevulinate from L-glutamyl-tRNA(Glu): step 2/2. This is Glutamate-1-semialdehyde 2,1-aminomutase from Photobacterium profundum (strain SS9).